Here is a 422-residue protein sequence, read N- to C-terminus: Isocitrate dehydrogenase [NADP] (422 aa).

Residue Thr94 participates in NADP(+) binding. Residues Ser103, Asn105, Arg109, Arg119, and Arg143 each coordinate D-threo-isocitrate. Residue Asp310 participates in Mg(2+) binding. NADP(+) contacts are provided by residues 344–350 (HGTAPKY), Asn357, Tyr396, and Arg400.

The protein belongs to the isocitrate and isopropylmalate dehydrogenases family. In terms of assembly, homodimer. Mg(2+) serves as cofactor. It depends on Mn(2+) as a cofactor.

It catalyses the reaction D-threo-isocitrate + NADP(+) = 2-oxoglutarate + CO2 + NADPH. In terms of biological role, catalyzes the oxidative decarboxylation of isocitrate to 2-oxoglutarate and carbon dioxide with the concomitant reduction of NADP(+). In Staphylococcus aureus (strain MSSA476), this protein is Isocitrate dehydrogenase [NADP] (icd).